A 475-amino-acid polypeptide reads, in one-letter code: Putative F-box protein At3g58960 (475 aa).

In terms of domain architecture, F-box spans 1–49 (MDRISSLSNDIISNIVSFLSAKDAAVASVLSKRWQNIYTIVPNLEFDNT).

The chain is Putative F-box protein At3g58960 from Arabidopsis thaliana (Mouse-ear cress).